A 166-amino-acid polypeptide reads, in one-letter code: Early E3 18.5 kDa glycoprotein (166 aa).

The signal sequence occupies residues 1–19 (MGPILVLLVLLSLLEAGSA). At 20–131 (NYDPCLDFDP…SKDNIVTFSI (112 aa)) the chain is on the lumenal side. N-linked (GlcNAc...) asparagine; by host glycosylation occurs at N31. Intrachain disulfides connect C32–C50 and C44–C106. N-linked (GlcNAc...) asparagine; by host glycans are attached at residues N63, N67, and N97. Residues 132–152 (AYCLCACLLTALLCVCIHLLV) form a helical membrane-spanning segment. Over 153-166 (TTRIKNANNKEKMP) the chain is Cytoplasmic. The Di-lysine motif signature appears at 162–166 (KEKMP).

It belongs to the adenoviridae E19 family. Post-translationally, both disulfide bonds are absolutely critical for the interaction with MHC antigens. In terms of processing, N-glycosylated; high-mannose.

It is found in the host endoplasmic reticulum membrane. Functionally, binds and retains class I heavy chains in the endoplasmic reticulum during the early period of virus infection, thereby impairing their transport to the cell surface. Also delays the expression of class I alleles that it cannot affect by direct retention. Binds transporters associated with antigen processing (TAP) and acts as a tapasin inhibitor, preventing class I/TAP association. In consequence, infected cells are masked for immune recognition by cytotoxic T-lymphocytes. This is Early E3 18.5 kDa glycoprotein from Human adenovirus B serotype 11 (strain BC34) (HAdV-11).